The primary structure comprises 585 residues: MGFDYAIVHVKYTIPPAVLLTLLYRPLFTKLDAFKVLFLVTVAVTATIPWDSYLIRTNIWSYPDHVVIGPTLLDIPLEEVFFFFIQTYNTTLLYLILSKPTFQPAYLRAGRPTASSPWKYQKLAGQLFLVGATVWAGLRVHENAKGTYTGLIVVWAAPIILLQWTLAYQFILGLPWTNTVLPIAIPTLYLWLVDTLALRRGTWVISPGTKYGVHLWDGLEIEEALFFFVTNTLIVFGQLAFDNALAVLYTFPALFPKPPSMPTPLDLINALWVSPYKYDRARLAGLQDAVLRLKRKSRSFYLASATFPGPLRSDLLLLYSFCRVADDLVDNAATAEEAKEWISKLHQYLDLVYSDAKSSTVSEDFVQAHFPSDARSALLQLPAHKLPRQPLQDLLHGFEMDLAFNTSSPIKTETDLRLYSERVAGTVAQMCIELIFRLYPSNMTSGEERKVVDAGNQMGMALQYVNIARDISVDAHIGRVYLPLDWLQESGLTYDEVLISPEGARMESLRMRLLEKAFSIYDGARGAIETLPVEARGPIRVAVESYMEIGRTLRQKGYTVRAGRATVSKWRRVIVAWRTLNKSIA.

A lycopene beta-cyclase region spans residues 1–243; that stretch reads MGFDYAIVHV…IVFGQLAFDN (243 aa). The next 7 helical transmembrane spans lie at 3–23, 35–55, 75–97, 123–141, 151–171, 173–193, and 221–241; these read FDYA…LTLL, KVLF…SYLI, IPLE…YLIL, LAGQ…LRVH, LIVV…YQFI, GLPW…LWLV, and IEEA…QLAF. The phytoene synthase stretch occupies residues 250-585; it reads TFPALFPKPP…AWRTLNKSIA (336 aa).

This sequence in the N-terminal section; belongs to the lycopene beta-cyclase family. The protein in the C-terminal section; belongs to the phytoene/squalene synthase family.

The protein resides in the membrane. It catalyses the reaction all-trans-lycopene = gamma-carotene. The catalysed reaction is gamma-carotene = all-trans-beta-carotene. The enzyme catalyses 2 (2E,6E,10E)-geranylgeranyl diphosphate = 15-cis-phytoene + 2 diphosphate. It participates in carotenoid biosynthesis; beta-carotene biosynthesis. Its pathway is carotenoid biosynthesis; phytoene biosynthesis; all-trans-phytoene from geranylgeranyl diphosphate: step 1/1. Functionally, bifunctional enzyme that catalyzes the reactions from geranylgeranyl diphosphate to phytoene (phytoene synthase) and lycopene to beta-carotene via the intermediate gamma-carotene (lycopene cyclase). This is Bifunctional lycopene cyclase/phytoene synthase from Phaeosphaeria nodorum (strain SN15 / ATCC MYA-4574 / FGSC 10173) (Glume blotch fungus).